The following is a 177-amino-acid chain: MSKIGKHPVAIPAGVTASVDGQTVKVKGPKGALEVVLVEEIQASLEGGELKIAMRGETPRHKSMWGMSRTLVANLVEGVTKGFEKKLEINGVGYKAAVAGKNLQLSLGYSHDVIYPIPEGIQIAAPKPTELVVTGINKQQVGQVAAEIREFRGPEPYKGKGVKYAGEFIFRKEGKKK.

The protein belongs to the universal ribosomal protein uL6 family. Part of the 50S ribosomal subunit.

This protein binds to the 23S rRNA, and is important in its secondary structure. It is located near the subunit interface in the base of the L7/L12 stalk, and near the tRNA binding site of the peptidyltransferase center. The sequence is that of Large ribosomal subunit protein uL6 from Azorhizobium caulinodans (strain ATCC 43989 / DSM 5975 / JCM 20966 / LMG 6465 / NBRC 14845 / NCIMB 13405 / ORS 571).